The primary structure comprises 179 residues: uncharacterized protein (179 aa).

A signal peptide spans 1 to 27 (MNKSMIQSGGYVLLAGLILAMSSTLFA). Cysteines 43 and 83 form a disulfide.

The protein belongs to the fimbrial protein family.

It is found in the fimbrium. Part of the yfcOPQRSUV fimbrial operon. Could contribute to adhesion to various surfaces in specific environmental niches. Increases adhesion to eukaryotic T24 bladder epithelial cells in the absence of fim genes. This is an uncharacterized protein from Escherichia coli (strain K12).